The primary structure comprises 201 residues: Small ribosomal subunit protein uS4c (201 aa).

In terms of domain architecture, S4 RNA-binding spans 89–150 (MRLDNILFRL…KQRSKVLIQN (62 aa)).

The protein belongs to the universal ribosomal protein uS4 family. Part of the 30S ribosomal subunit. Contacts protein S5. The interaction surface between S4 and S5 is involved in control of translational fidelity.

Its subcellular location is the plastid. The protein localises to the chloroplast. In terms of biological role, one of the primary rRNA binding proteins, it binds directly to 16S rRNA where it nucleates assembly of the body of the 30S subunit. With S5 and S12 plays an important role in translational accuracy. This chain is Small ribosomal subunit protein uS4c (rps4), found in Acorus calamus (Sweet flag).